Consider the following 49-residue polypeptide: Large ribosomal subunit protein bL33B (49 aa).

Belongs to the bacterial ribosomal protein bL33 family.

This Bacillus licheniformis (strain ATCC 14580 / DSM 13 / JCM 2505 / CCUG 7422 / NBRC 12200 / NCIMB 9375 / NCTC 10341 / NRRL NRS-1264 / Gibson 46) protein is Large ribosomal subunit protein bL33B.